Reading from the N-terminus, the 466-residue chain is MENGKEKFSLFSAILSVICVVFVAEAAAPVAAIGNSQFFWWIVLIVAFLLPYGLITSELGTTYTGEGGLYDWITKAFDHRWGARASWFYWVNFPLWMASLAVLCPDLLHTMFGFQLNTGISLLIELIFIWVIVLISLYPVSDSVWILNGGAVIKVFLALALGGLGVYSALTKGVANHYTLASLLPSFDLHSLSFISVIIFNLLGFEVICTFADSMENPKKQIPQSIIIGGIVIAAIYMFSAFGIGVAIPTNKLSTSSGLVDSFQVMLGTPTGWFISLIAFLFMLTLVGNMVSWSQGVNNIASYAADNGDMPKFFSKRRASNGISWGAALMNGIVATFIVVIAPLLPNQDLFWSFFSLNLVLFLLSYIPVFPAFYKLRKIDPETPRPFKVSGSDGILKVYMALPMIIIIISLIFTAIPLQYDKASLTEQLPITIGAIIFIVIGELIIKRKLQVQVSQPSSSHMNSYS.

Helical transmembrane passes span 8 to 28, 30 to 50, 85 to 105, 120 to 140, 144 to 164, 192 to 212, 226 to 246, 273 to 293, 325 to 345, 350 to 370, 398 to 418, and 426 to 446; these read FSLF…EAAA, VAAI…AFLL, ASWF…VLCP, ISLL…LYPV, VWIL…LGGL, LSFI…CTFA, IIIG…GIGV, WFIS…MVSW, WGAA…APLL, LFWS…IPVF, VYMA…AIPL, and TEQL…ELII.

The protein belongs to the amino acid-polyamine-organocation (APC) superfamily. Glutamate:GABA antiporter (GGA) (TC 2.A.3.7) family.

Its subcellular location is the cell membrane. Functionally, probably catalyzes agmatine/putrescine exchange. The sequence is that of Probable agmatine/putrescine antiporter AguD from Lactococcus lactis subsp. lactis (strain IL1403) (Streptococcus lactis).